The chain runs to 398 residues: Homocysteine-responsive endoplasmic reticulum-resident ubiquitin-like domain member 2 protein (398 aa).

One can recognise a Ubiquitin-like domain in the interval 11-90 (VTLVIKAPNQ…HMVHLVCASR (80 aa)). Disordered stretches follow at residues 90-143 (RTPP…SIRH) and 212-247 (NQST…NVAP). Low complexity predominate over residues 96–125 (PKASKSSKSMGTSSSGRSSSSGSANPGSTS). Over residues 233–245 (NPPPNPPRAPPNV) the composition is skewed to pro residues. The chain crosses the membrane as a helical span at residues 298–318 (FVMVMGALILVYMHQAGWFPL).

Its subcellular location is the membrane. In terms of biological role, could be involved in the unfolded protein response (UPR) pathway. This chain is Homocysteine-responsive endoplasmic reticulum-resident ubiquitin-like domain member 2 protein (herpud2), found in Xenopus laevis (African clawed frog).